The following is a 395-amino-acid chain: Acetylornithine aminotransferase (395 aa).

Pyridoxal 5'-phosphate contacts are provided by residues 117 to 118 (GA) and Phe144. Arg147 contacts N(2)-acetyl-L-ornithine. A pyridoxal 5'-phosphate-binding site is contributed by 230-233 (DEVQ). Lys259 is subject to N6-(pyridoxal phosphate)lysine. Ser285 serves as a coordination point for N(2)-acetyl-L-ornithine. Thr286 is a binding site for pyridoxal 5'-phosphate.

It belongs to the class-III pyridoxal-phosphate-dependent aminotransferase family. ArgD subfamily. As to quaternary structure, homodimer. The cofactor is pyridoxal 5'-phosphate.

The protein resides in the cytoplasm. The catalysed reaction is N(2)-acetyl-L-ornithine + 2-oxoglutarate = N-acetyl-L-glutamate 5-semialdehyde + L-glutamate. It functions in the pathway amino-acid biosynthesis; L-arginine biosynthesis; N(2)-acetyl-L-ornithine from L-glutamate: step 4/4. The polypeptide is Acetylornithine aminotransferase (Methanosarcina mazei (strain ATCC BAA-159 / DSM 3647 / Goe1 / Go1 / JCM 11833 / OCM 88) (Methanosarcina frisia)).